The primary structure comprises 92 residues: Small ribosomal subunit protein uS19 (92 aa).

It belongs to the universal ribosomal protein uS19 family.

In terms of biological role, protein S19 forms a complex with S13 that binds strongly to the 16S ribosomal RNA. This chain is Small ribosomal subunit protein uS19, found in Prochlorococcus marinus (strain MIT 9301).